The chain runs to 180 residues: UPF0743 protein C215.06c (180 aa).

2 C2HC LYAR-type zinc fingers span residues 1–26 (MVSFCCEVCQDIIKKPKLDQHRSRCH) and 27–51 (GAYFTCIDCNTTFERTDYRNHTSCM). Zn(2+)-binding residues include cysteine 6, cysteine 9, histidine 21, cysteine 25, cysteine 32, cysteine 35, histidine 47, and cysteine 50. The interval 61-125 (LYRPTKKELK…KETVSSPAEQ (65 aa)) is disordered. Over residues 77–95 (NAVNSKELSPNTDNQNTPA) the composition is skewed to polar residues. Residue serine 85 is modified to Phosphoserine. Residues 100-111 (HSLDENEKDKEN) show a composition bias toward basic and acidic residues.

The protein belongs to the UPF0743 family.

It localises to the nucleus. In Schizosaccharomyces pombe (strain 972 / ATCC 24843) (Fission yeast), this protein is UPF0743 protein C215.06c.